We begin with the raw amino-acid sequence, 688 residues long: Elongation factor G 2 (688 aa).

A tr-type G domain is found at 7-282 (DSIRNIGIIS…AVAAYLPSPR (276 aa)). Residues 16–23 (SHIDAGKT), 80–84 (DTPGH), and 134–137 (NKMD) contribute to the GTP site.

It belongs to the TRAFAC class translation factor GTPase superfamily. Classic translation factor GTPase family. EF-G/EF-2 subfamily.

It localises to the cytoplasm. In terms of biological role, catalyzes the GTP-dependent ribosomal translocation step during translation elongation. During this step, the ribosome changes from the pre-translocational (PRE) to the post-translocational (POST) state as the newly formed A-site-bound peptidyl-tRNA and P-site-bound deacylated tRNA move to the P and E sites, respectively. Catalyzes the coordinated movement of the two tRNA molecules, the mRNA and conformational changes in the ribosome. In Geobacter metallireducens (strain ATCC 53774 / DSM 7210 / GS-15), this protein is Elongation factor G 2.